The primary structure comprises 280 residues: Protein lyl-1 (280 aa).

The segment at methionine 1–valine 60 is disordered. Residues serine 25–proline 40 are compositionally biased toward pro residues. Positions alanine 150–leucine 202 constitute a bHLH domain. The interval alanine 214–arginine 280 is disordered. Over residues arginine 229 to alanine 245 the composition is skewed to basic and acidic residues. Residues proline 257–proline 267 are compositionally biased toward low complexity. Phosphoserine occurs at positions 260 and 276.

In terms of assembly, efficient DNA binding requires dimerization with another bHLH protein.

It is found in the nucleus. This chain is Protein lyl-1 (LYL1), found in Homo sapiens (Human).